The chain runs to 347 residues: Probable magnetosome protein Mms36 (347 aa).

A helical membrane pass occupies residues 25–45; that stretch reads VLVLYLAIAVVVAVLAWPWLA.

It is found in the magnetosome membrane. Its function is as follows. The 4 genes of this operon collectively influence magnetosome size and number. The protein is Probable magnetosome protein Mms36 of Magnetospirillum gryphiswaldense (strain DSM 6361 / JCM 21280 / NBRC 15271 / MSR-1).